The sequence spans 32 residues: DTANDPKYGSQYAPQKVNADVDQGVXXXHPEL.

Residues 1-32 (DTANDPKYGSQYAPQKVNADVDQGVXXXHPEL) are disordered. D22 acts as the Charge relay system in catalysis.

Belongs to the peptidase S8 family.

It is found in the secreted. The chain is Secreted proteinase from Haloferax mediterranei (Halobacterium mediterranei).